The chain runs to 470 residues: uncharacterized protein (470 aa).

In terms of domain architecture, SPX spans 1–337 (MKFGHDFKRA…SLTAQPLFFQ (337 aa)). The tract at residues 118–145 (ASNVPSTPSDSTQQPPTNTLPSVSASSQ) is disordered. Low complexity predominate over residues 122-136 (PSTPSDSTQQPPTNT). Residues 374-413 (CAICSNVAYKPVRLGCSHVFCLHCLIILQKQKVDFCPLCR) form an RING-type zinc finger.

It is found in the cytoplasm. This is an uncharacterized protein from Schizosaccharomyces pombe (strain 972 / ATCC 24843) (Fission yeast).